Consider the following 239-residue polypeptide: Ribosomal RNA large subunit methyltransferase E (239 aa).

Positions 88, 90, 111, 127, and 151 each coordinate S-adenosyl-L-methionine. The Proton acceptor role is filled by lysine 191.

The protein belongs to the class I-like SAM-binding methyltransferase superfamily. RNA methyltransferase RlmE family.

It is found in the cytoplasm. The catalysed reaction is uridine(2552) in 23S rRNA + S-adenosyl-L-methionine = 2'-O-methyluridine(2552) in 23S rRNA + S-adenosyl-L-homocysteine + H(+). In terms of biological role, specifically methylates the uridine in position 2552 of 23S rRNA at the 2'-O position of the ribose in the fully assembled 50S ribosomal subunit. The chain is Ribosomal RNA large subunit methyltransferase E from Bartonella bacilliformis (strain ATCC 35685 / KC583 / Herrer 020/F12,63).